Here is a 178-residue protein sequence, read N- to C-terminus: Ribosome maturation factor RimM (178 aa).

The PRC barrel domain maps to 101–178 (ADEYYWYQLV…VMRVEWDADF (78 aa)).

It belongs to the RimM family. In terms of assembly, binds ribosomal protein uS19.

The protein localises to the cytoplasm. Functionally, an accessory protein needed during the final step in the assembly of 30S ribosomal subunit, possibly for assembly of the head region. Essential for efficient processing of 16S rRNA. May be needed both before and after RbfA during the maturation of 16S rRNA. It has affinity for free ribosomal 30S subunits but not for 70S ribosomes. The sequence is that of Ribosome maturation factor RimM from Pseudomonas putida (strain ATCC 47054 / DSM 6125 / CFBP 8728 / NCIMB 11950 / KT2440).